Consider the following 165-residue polypeptide: Mating factor alpha-1 (165 aa).

Positions 1–19 (MRFPSIFTAVLFAASSALA) form a signal peptide, or 20. 4 consecutive propeptides follow at residues 20–89 (APVN…EAEA), 105–110 (EAEAEA), 126–131 (EADAEA), and 147–152 (EADAEA).

The active factor is excreted into the culture medium by haploid cells of the alpha mating type and acts on cells of the opposite mating type (type A). It mediates the conjugation process between the two types by inhibiting the initiation of DNA synthesis in type a cells and synchronizing them with type alpha. The sequence is that of Mating factor alpha-1 (MF(ALPHA)1) from Saccharomyces cerevisiae (strain ATCC 204508 / S288c) (Baker's yeast).